Reading from the N-terminus, the 606-residue chain is Glucose methanol choline oxidoreductase atC (606 aa).

An N-terminal signal peptide occupies residues 1 to 19 (MRVFPTYIAVSGLFGGAFA). N-linked (GlcNAc...) asparagine glycosylation is found at asparagine 43, asparagine 69, asparagine 87, asparagine 290, asparagine 368, asparagine 418, asparagine 421, and asparagine 552.

It belongs to the GMC oxidoreductase family.

It catalyses the reaction terremutin + A = terreate + AH2. It functions in the pathway secondary metabolite biosynthesis. Glucose methanol choline oxidoreductase; part of the gene cluster that mediates the biosynthesis of terreic acid, a quinone epoxide inhibitor of Bruton's tyrosine kinase. The first step of the pathway is the synthesis of 6-methylsalicylic acid (6-MSA) by the 6-methylsalicylic acid synthase atX. In the biosynthesis of 6-MSA, atX utilizes one acetyl-CoA and three malonyl-CoAs as its substrates and catalyzes a series of programmed reactions including Claisen condensation, reduction, aldol cyclization, and the hydrolytic cleavage that yields 6-MSA. The 6-methylsalicylate 1-monooxygenase atA then catalyzes the decarboxylative hydroxylation of 6-MSA to 3-methylcatechol. The next step is the conversion of 3-methylcatechol to 3-methyl-1,2,4-benzenetriol by cytochrome P450 monooxygenase atE, which is enhanced by cytochrome P450 monooxygenase atG. Then, the epoxidase atD catalyzes the epoxidation and hydroxyl oxidation of 3-methyl-1,2,4-benzenetriol to terremutin. Lastly, GMC oxidoreductase atC oxidizes terremutin to terreic acid. The polypeptide is Glucose methanol choline oxidoreductase atC (Aspergillus terreus (strain NIH 2624 / FGSC A1156)).